The sequence spans 342 residues: Elongation factor Ts (342 aa).

The involved in Mg(2+) ion dislocation from EF-Tu stretch occupies residues 79–82 (TDFV).

Belongs to the EF-Ts family.

It localises to the cytoplasm. Its function is as follows. Associates with the EF-Tu.GDP complex and induces the exchange of GDP to GTP. It remains bound to the aminoacyl-tRNA.EF-Tu.GTP complex up to the GTP hydrolysis stage on the ribosome. This chain is Elongation factor Ts (tsf), found in Lactococcus lactis subsp. lactis (strain IL1403) (Streptococcus lactis).